The sequence spans 345 residues: Annexin A9 (345 aa).

4 Annexin repeats span residues 41–112, 113–184, 197–266, and 270–341; these read FSVD…ALLQ, PAAQ…ALSK, NLEE…SLAS, and NTAL…ALCR.

This sequence belongs to the annexin family. In terms of assembly, homodimer.

In terms of biological role, may act as a low affinity receptor for acetylcholine. This Mus musculus (Mouse) protein is Annexin A9 (Anxa9).